The primary structure comprises 243 residues: 1-(5-phosphoribosyl)-5-[(5-phosphoribosylamino)methylideneamino] imidazole-4-carboxamide isomerase (243 aa).

Asp8 functions as the Proton acceptor in the catalytic mechanism. The active-site Proton donor is Asp130.

It belongs to the HisA/HisF family.

The protein localises to the cytoplasm. The enzyme catalyses 1-(5-phospho-beta-D-ribosyl)-5-[(5-phospho-beta-D-ribosylamino)methylideneamino]imidazole-4-carboxamide = 5-[(5-phospho-1-deoxy-D-ribulos-1-ylimino)methylamino]-1-(5-phospho-beta-D-ribosyl)imidazole-4-carboxamide. Its pathway is amino-acid biosynthesis; L-histidine biosynthesis; L-histidine from 5-phospho-alpha-D-ribose 1-diphosphate: step 4/9. This Cellvibrio japonicus (strain Ueda107) (Pseudomonas fluorescens subsp. cellulosa) protein is 1-(5-phosphoribosyl)-5-[(5-phosphoribosylamino)methylideneamino] imidazole-4-carboxamide isomerase.